The primary structure comprises 166 residues: Small ribosomal subunit protein uS5 (166 aa).

Positions 12-75 constitute an S5 DRBM domain; sequence YIEKLVQVNR…EAARRNMIQV (64 aa).

Belongs to the universal ribosomal protein uS5 family. In terms of assembly, part of the 30S ribosomal subunit. Contacts proteins S4 and S8.

In terms of biological role, with S4 and S12 plays an important role in translational accuracy. Functionally, located at the back of the 30S subunit body where it stabilizes the conformation of the head with respect to the body. This is Small ribosomal subunit protein uS5 from Ectopseudomonas mendocina (strain ymp) (Pseudomonas mendocina).